The primary structure comprises 678 residues: DNA ligase (678 aa).

NAD(+) contacts are provided by residues 47-51, 96-97, and glutamate 122; these read DSDYD and SL. Lysine 124 acts as the N6-AMP-lysine intermediate in catalysis. Residues arginine 145, glutamate 182, lysine 300, and lysine 324 each contribute to the NAD(+) site. 4 residues coordinate Zn(2+): cysteine 418, cysteine 421, cysteine 436, and cysteine 442. Residues 602–678 enclose the BRCT domain; the sequence is AYNESFTGKT…ILEDNLKDLL (77 aa).

Belongs to the NAD-dependent DNA ligase family. LigA subfamily. Requires Mg(2+) as cofactor. Mn(2+) serves as cofactor.

It catalyses the reaction NAD(+) + (deoxyribonucleotide)n-3'-hydroxyl + 5'-phospho-(deoxyribonucleotide)m = (deoxyribonucleotide)n+m + AMP + beta-nicotinamide D-nucleotide.. In terms of biological role, DNA ligase that catalyzes the formation of phosphodiester linkages between 5'-phosphoryl and 3'-hydroxyl groups in double-stranded DNA using NAD as a coenzyme and as the energy source for the reaction. It is essential for DNA replication and repair of damaged DNA. In Francisella tularensis subsp. tularensis (strain SCHU S4 / Schu 4), this protein is DNA ligase.